The chain runs to 140 residues: Large ribosomal subunit protein uL16 (140 aa).

Positions 1–24 (MALAPARTKYRKSQKGSRAGNAKR) are disordered.

Belongs to the universal ribosomal protein uL16 family. In terms of assembly, part of the 50S ribosomal subunit.

Binds 23S rRNA and is also seen to make contacts with the A and possibly P site tRNAs. This chain is Large ribosomal subunit protein uL16, found in Opitutus terrae (strain DSM 11246 / JCM 15787 / PB90-1).